The chain runs to 129 residues: Small ribosomal subunit protein eS6 (129 aa).

The interval Gln106–Glu129 is disordered.

It belongs to the eukaryotic ribosomal protein eS6 family.

The polypeptide is Small ribosomal subunit protein eS6 (Natronomonas pharaonis (strain ATCC 35678 / DSM 2160 / CIP 103997 / JCM 8858 / NBRC 14720 / NCIMB 2260 / Gabara) (Halobacterium pharaonis)).